Consider the following 268-residue polypeptide: UPF0294 protein ETA_26410 (268 aa).

It belongs to the UPF0294 family.

Its subcellular location is the cytoplasm. The sequence is that of UPF0294 protein ETA_26410 from Erwinia tasmaniensis (strain DSM 17950 / CFBP 7177 / CIP 109463 / NCPPB 4357 / Et1/99).